A 475-amino-acid chain; its full sequence is Vasculin-like protein 1 (475 aa).

Phosphoserine occurs at positions 49 and 76. 2 disordered regions span residues 92–115 (NLSGWHGSSRGHDGMSQRAGGSTG) and 160–191 (PSLNPEAGKQNQPCRPIGTPSGVWENPPSAKQ). At serine 202 the chain carries Phosphoserine. Disordered stretches follow at residues 237–271 (LVPKPAPPPSKPNAWKANRMEHKPGSLSSSREAAL) and 292–318 (PKESPSSTTPPIEISSSRLTKLTRRTT). Over residues 294-311 (ESPSSTTPPIEISSSRLT) the composition is skewed to low complexity. Position 300 is a phosphothreonine (threonine 300). At serine 383 the chain carries Phosphoserine. The disordered stretch occupies residues 456-475 (CEDSDTETSSSETSDDDAWK).

This sequence belongs to the vasculin family.

It localises to the nucleus. Functionally, possible transcription factor. This chain is Vasculin-like protein 1 (Gpbp1l1), found in Rattus norvegicus (Rat).